Consider the following 801-residue polypeptide: Phenylalanine--tRNA ligase beta subunit (801 aa).

The region spanning alanine 39–phenylalanine 153 is the tRNA-binding domain. Residues threonine 406–threonine 481 enclose the B5 domain. The Mg(2+) site is built by aspartate 459, aspartate 465, glutamate 468, and glutamate 469. In terms of domain architecture, FDX-ACB spans threonine 708 to arginine 801.

The protein belongs to the phenylalanyl-tRNA synthetase beta subunit family. Type 1 subfamily. Tetramer of two alpha and two beta subunits. Mg(2+) serves as cofactor.

It is found in the cytoplasm. It carries out the reaction tRNA(Phe) + L-phenylalanine + ATP = L-phenylalanyl-tRNA(Phe) + AMP + diphosphate + H(+). The protein is Phenylalanine--tRNA ligase beta subunit of Streptococcus pyogenes serotype M18 (strain MGAS8232).